A 75-amino-acid polypeptide reads, in one-letter code: U6-lycotoxin-Ls1d (75 aa).

The signal sequence occupies residues 1 to 21 (MKLLLFTALVLVVISLVEVEA). Positions 22 to 25 (ENER) are excised as a propeptide.

Belongs to the neurotoxin 19 (CSTX) family. 06 (U6-Lctx) subfamily. In terms of processing, contains 4 disulfide bonds. As to expression, expressed by the venom gland.

It is found in the secreted. In Lycosa singoriensis (Wolf spider), this protein is U6-lycotoxin-Ls1d.